The sequence spans 249 residues: Segregation and condensation protein A (249 aa).

This sequence belongs to the ScpA family. As to quaternary structure, component of a cohesin-like complex composed of ScpA, ScpB and the Smc homodimer, in which ScpA and ScpB bind to the head domain of Smc. The presence of the three proteins is required for the association of the complex with DNA.

Its subcellular location is the cytoplasm. In terms of biological role, participates in chromosomal partition during cell division. May act via the formation of a condensin-like complex containing Smc and ScpB that pull DNA away from mid-cell into both cell halves. The polypeptide is Segregation and condensation protein A (Mycoplasmopsis pulmonis (strain UAB CTIP) (Mycoplasma pulmonis)).